Here is a 362-residue protein sequence, read N- to C-terminus: Phosphoserine aminotransferase (362 aa).

L-glutamate is bound by residues Ser9 and Arg42. Pyridoxal 5'-phosphate contacts are provided by residues 76–77 (GR), Trp102, Thr153, Asp174, and Gln197. Residue Lys198 is modified to N6-(pyridoxal phosphate)lysine. Residue 239–240 (NT) coordinates pyridoxal 5'-phosphate.

This sequence belongs to the class-V pyridoxal-phosphate-dependent aminotransferase family. SerC subfamily. In terms of assembly, homodimer. It depends on pyridoxal 5'-phosphate as a cofactor.

The protein localises to the cytoplasm. The catalysed reaction is O-phospho-L-serine + 2-oxoglutarate = 3-phosphooxypyruvate + L-glutamate. It carries out the reaction 4-(phosphooxy)-L-threonine + 2-oxoglutarate = (R)-3-hydroxy-2-oxo-4-phosphooxybutanoate + L-glutamate. Its pathway is amino-acid biosynthesis; L-serine biosynthesis; L-serine from 3-phospho-D-glycerate: step 2/3. It functions in the pathway cofactor biosynthesis; pyridoxine 5'-phosphate biosynthesis; pyridoxine 5'-phosphate from D-erythrose 4-phosphate: step 3/5. In terms of biological role, catalyzes the reversible conversion of 3-phosphohydroxypyruvate to phosphoserine and of 3-hydroxy-2-oxo-4-phosphonooxybutanoate to phosphohydroxythreonine. The protein is Phosphoserine aminotransferase of Escherichia coli O6:K15:H31 (strain 536 / UPEC).